Reading from the N-terminus, the 302-residue chain is Homoserine O-acetyltransferase (302 aa).

Catalysis depends on C142, which acts as the Acyl-thioester intermediate. Substrate-binding residues include K163 and S192. H235 serves as the catalytic Proton acceptor. E237 is a catalytic residue. R249 lines the substrate pocket.

The protein belongs to the MetA family.

It localises to the cytoplasm. It catalyses the reaction L-homoserine + acetyl-CoA = O-acetyl-L-homoserine + CoA. It participates in amino-acid biosynthesis; L-methionine biosynthesis via de novo pathway; O-acetyl-L-homoserine from L-homoserine: step 1/1. Transfers an acetyl group from acetyl-CoA to L-homoserine, forming acetyl-L-homoserine. This chain is Homoserine O-acetyltransferase, found in Bacillus licheniformis (strain ATCC 14580 / DSM 13 / JCM 2505 / CCUG 7422 / NBRC 12200 / NCIMB 9375 / NCTC 10341 / NRRL NRS-1264 / Gibson 46).